The primary structure comprises 187 residues: UPF0232 protein MMAR_0004 (187 aa).

2 disordered regions span residues 1 to 77 (MSDD…QPLG) and 166 to 187 (ASPS…DTYG). The segment covering 14–30 (AARDELSGMDLVRRTLA) has biased composition (basic and acidic residues). Positions 31–55 (EARAAARARGQDPGRGFAAGPAPRR) are enriched in low complexity.

The protein belongs to the UPF0232 family.

The protein is UPF0232 protein MMAR_0004 of Mycobacterium marinum (strain ATCC BAA-535 / M).